Here is a 534-residue protein sequence, read N- to C-terminus: Beta-glucosidase 31 (534 aa).

Residues 1 to 22 (MAIKLIALVITLCVASWDVAQG) form the signal peptide. A beta-D-glucoside is bound at residue Q51. N68 carries an N-linked (GlcNAc...) asparagine glycan. A beta-D-glucoside is bound by residues H154 and 199–200 (NE). Catalysis depends on E200, which acts as the Proton donor. The cysteines at positions 219 and 227 are disulfide-linked. Y344 provides a ligand contact to a beta-D-glucoside. N-linked (GlcNAc...) asparagine glycosylation is present at N374. E417 serves as a coordination point for a beta-D-glucoside. E417 functions as the Nucleophile in the catalytic mechanism. N425 carries an N-linked (GlcNAc...) asparagine glycan. A beta-D-glucoside-binding positions include W467, 474-475 (EW), and F483.

The protein belongs to the glycosyl hydrolase 1 family.

It carries out the reaction Hydrolysis of terminal, non-reducing beta-D-glucosyl residues with release of beta-D-glucose.. This chain is Beta-glucosidase 31, found in Arabidopsis thaliana (Mouse-ear cress).